The primary structure comprises 837 residues: Protein kintoun (837 aa).

Disordered stretches follow at residues 100–119 (APSS…GSHW), 205–224 (LPGV…LPDF), 230–249 (YPAA…LQPA), and 363–515 (AAAP…GPGT). The segment covering 233–242 (APGPRAPSPP) has biased composition (pro residues). Residues 428 to 442 (GEERVPKPGEQDLSR) are compositionally biased toward basic and acidic residues. Low complexity predominate over residues 445–459 (GSPPGSVEEPSPGGE). Ser-461 and Ser-467 each carry phosphoserine. Positions 484–498 (ESARGDSSVETREES) are enriched in basic and acidic residues. 3 positions are modified to phosphoserine: Ser-640, Ser-641, and Ser-773.

Belongs to the PIH1 family. Kintoun subfamily. As to quaternary structure, interacts with CFAP300. Interacts with DNAAF4. Interacts with DNAAF6/PIH1D3. Interacts with DNAI2 and HSPA1A.

It is found in the cytoplasm. The protein localises to the dynein axonemal particle. Functionally, required for cytoplasmic pre-assembly of axonemal dyneins, thereby playing a central role in motility in cilia and flagella. Involved in pre-assembly of dynein arm complexes in the cytoplasm before intraflagellar transport loads them for the ciliary compartment. This is Protein kintoun from Homo sapiens (Human).